A 451-amino-acid chain; its full sequence is ACT domain-containing protein ACR4 (451 aa).

4 consecutive ACT domains span residues Val35–Ser118, Val123–Arg200, Val259–Gly335, and Lys337–Gln416. The disordered stretch occupies residues Lys409–Thr428. The span at Asn410 to Lys420 shows a compositional bias: polar residues.

In terms of tissue distribution, highly expressed in flowers and at lower levels in leaves and siliques.

In terms of biological role, may bind amino acids. The polypeptide is ACT domain-containing protein ACR4 (Arabidopsis thaliana (Mouse-ear cress)).